A 237-amino-acid polypeptide reads, in one-letter code: Endonuclease V (237 aa).

2 residues coordinate Mg(2+): Asp46 and Asp114.

Belongs to the endonuclease V family. Requires Mg(2+) as cofactor.

The protein localises to the cytoplasm. It carries out the reaction Endonucleolytic cleavage at apurinic or apyrimidinic sites to products with a 5'-phosphate.. DNA repair enzyme involved in the repair of deaminated bases. Selectively cleaves double-stranded DNA at the second phosphodiester bond 3' to a deoxyinosine leaving behind the intact lesion on the nicked DNA. This is Endonuclease V from Xanthomonas oryzae pv. oryzae (strain PXO99A).